Reading from the N-terminus, the 149-residue chain is DnaJ homolog subfamily C member 24 (149 aa).

In terms of domain architecture, J spans D11 to R82. A DPH-type MB domain is found at V93 to Y148. Residues C115, C117, C136, and C139 each contribute to the Zn(2+) site.

This sequence belongs to the DPH4 family. Monomer and homooligomer. Iron binding promotes oligomerization.

Its subcellular location is the cytoplasm. It is found in the cytoskeleton. The protein operates within protein modification; peptidyl-diphthamide biosynthesis. Stimulates the ATPase activity of several Hsp70-type chaperones. This ability is enhanced by iron-binding. The iron-bound form is redox-active and can function as electron carrier. Plays a role in the diphthamide biosynthesis, a post-translational modification of histidine which occurs in translation elongation factor 2 (EEF2) which can be ADP-ribosylated by diphtheria toxin and by Pseudomonas exotoxin A (Eta). The sequence is that of DnaJ homolog subfamily C member 24 from Homo sapiens (Human).